The sequence spans 934 residues: MSSEFLSELHWEDGFAIPVANQENKILEDQLAKLHKEKSNLQDQLRDYEDRINSMSSHLKNVNQEFLFTQSLYKARECEIESEEHFKAIAERELGRVKDEIQQLEKEMAIILERKNDKENAIFKATQKLDGLKCQMNWDQQALEAWLEESAHKDSDSLTLQKYSQQDNNKIRALTLKLEKLTMECNEKRKLLDNELTETLSAQLELDKAAQDFRKIHVERQELIQQWENTIEQMQRRDQEIDNCALALARIKQEAREKEGVVREKIKFLENEVGNNVEYERRISIAERKVSKCRMEYQRQEANRNQLKDELDTLKTTLNRTSSDLEALRKNISKVKKDILDETGRLQKLKHHNEIVKHKLKMITEKTISIEEKATNMEDMLKEEEKNLKEVEVQLNIVKGVLFKKVQELQSAITKEKALGSEIEGTRSSLKHLNQRLHKLDFETLKQQEIMYSQDFYIQQVERRMSRLKGEINSEEKQALEVKIVELRKTMEERKSTLSLLEEQIKKLHNDLYFIKKSNGKNKDEKESLMNKIGELHLFVDRSEKELNKAKAVKEDLMIEDNLLKLQVKRARELLYSKAEEVLSLEKRKQQLCTAMEERVEEIKVHKAMLTSQIRYVDQQRQTVSSEFHERLSKIDKLKNRYEILTVVMLPPEGEEEKTQSYYVIKAAQEKEELQREGDSLDAKISKAEKEIYALQNTLQVLSSCNNNYKQSFKKVTPSSDEYGIKIQLEEQKRSADEKYRCKQRQIRELQEDIQSMENTFEVIEHLANNAREKLSEKQTLSFQLRKETEEQKPKIQRVTKQCGRLRREIRILRQTNDETLEEQDIQLREIIQFHKDIDQMLVNAMENAEIHVIFQTYFQQNGLELPTAKGPSSRSSSQSSLSSIRSLEDSIPISPPTAKVIELRFPGPPARSDSSRSSSGSNSNIPKGKKLNK.

Coiled coils occupy residues 17 to 133 (IPVA…DGLK), 164 to 512 (SQQD…HNDL), 540 to 615 (VDRS…SQIR), and 664 to 826 (VIKA…EQDI). The tract at residues 866-934 (LPTAKGPSSR…NIPKGKKLNK (69 aa)) is disordered. Residues 873 to 892 (SSRSSSQSSLSSIRSLEDSI) show a composition bias toward low complexity. Phosphoserine is present on residues S887 and S895. The span at 912 to 925 (RSDSSRSSSGSNSN) shows a compositional bias: low complexity.

Belongs to the CCDC39 family.

It localises to the cytoplasm. The protein resides in the cytoskeleton. It is found in the cilium axoneme. Required for assembly of dynein regulatory complex (DRC) and inner dynein arm (IDA) complexes, which are responsible for ciliary beat regulation, thereby playing a central role in motility in cilia and flagella. Probably acts together with CCDC40 to form a molecular ruler that determines the 96 nanometer (nm) repeat length and arrangements of components in cilia and flagella. Not required for outer dynein arm complexes assembly. This is Coiled-coil domain-containing protein 39 (Ccdc39) from Rattus norvegicus (Rat).